Reading from the N-terminus, the 502-residue chain is uncharacterized protein (502 aa).

A helical transmembrane segment spans residues 1-21 (MKIFLVILSVFFFNGCFGLAY). 2 PLD phosphodiesterase domains span residues 162-189 (IKKR…GDNY) and 396-423 (TKHS…DPRS).

Belongs to the phospholipase D family. Cardiolipin synthase subfamily.

The protein resides in the cell membrane. This is an uncharacterized protein from Helicobacter pylori (strain J99 / ATCC 700824) (Campylobacter pylori J99).